The following is a 521-amino-acid chain: Bifunctional purine biosynthesis protein PurH (521 aa).

An MGS-like domain is found at 1-145; that stretch reads MIKQALISVS…KNHRDVTVVV (145 aa).

Belongs to the PurH family.

It catalyses the reaction (6R)-10-formyltetrahydrofolate + 5-amino-1-(5-phospho-beta-D-ribosyl)imidazole-4-carboxamide = 5-formamido-1-(5-phospho-D-ribosyl)imidazole-4-carboxamide + (6S)-5,6,7,8-tetrahydrofolate. The catalysed reaction is IMP + H2O = 5-formamido-1-(5-phospho-D-ribosyl)imidazole-4-carboxamide. It functions in the pathway purine metabolism; IMP biosynthesis via de novo pathway; 5-formamido-1-(5-phospho-D-ribosyl)imidazole-4-carboxamide from 5-amino-1-(5-phospho-D-ribosyl)imidazole-4-carboxamide (10-formyl THF route): step 1/1. It participates in purine metabolism; IMP biosynthesis via de novo pathway; IMP from 5-formamido-1-(5-phospho-D-ribosyl)imidazole-4-carboxamide: step 1/1. This is Bifunctional purine biosynthesis protein PurH from Paraburkholderia xenovorans (strain LB400).